We begin with the raw amino-acid sequence, 239 residues long: MNIDIVISADHIDEKRLINKTVIIIDILRATSVITTAINNGCKKVIPVLTVEEAKDIAKNSKEDIILGGERNALKIDGFNFSNSPLEYTKKYVEGKTVVLSTTNGTRAINNSFNAKTILISALINSKATAKAIDKLNEDLIIINSGTNGQFSIDDFICSGYLIDCLYNIRKDLELSDIAKTAHYIYTNNKDIESFVKKATHYSRLKSLNLEKDLEYCFQKDIIDVVPQYKDGYIIKSNI.

This sequence belongs to the ComB family. Mg(2+) serves as cofactor.

It carries out the reaction (2R)-O-phospho-3-sulfolactate + H2O = (2R)-3-sulfolactate + phosphate. This chain is Probable 2-phosphosulfolactate phosphatase, found in Clostridium botulinum (strain Kyoto / Type A2).